Consider the following 132-residue polypeptide: Small ribosomal subunit protein uS11 (132 aa).

The protein belongs to the universal ribosomal protein uS11 family. Part of the 30S ribosomal subunit. Interacts with proteins S7 and S18. Binds to IF-3.

In terms of biological role, located on the platform of the 30S subunit, it bridges several disparate RNA helices of the 16S rRNA. Forms part of the Shine-Dalgarno cleft in the 70S ribosome. In Oenococcus oeni (strain ATCC BAA-331 / PSU-1), this protein is Small ribosomal subunit protein uS11.